The following is a 585-amino-acid chain: Putative phospholipase B-like 2 (585 aa).

An N-terminal signal peptide occupies residues 1-35; it reads MAAPMDRTHGGRAARALRRALALASLAGLLLSGLA. N84, N102, and N106 each carry an N-linked (GlcNAc...) asparagine glycan. C138 and C148 are disulfide-bonded. Residues N227 and N432 are each glycosylated (N-linked (GlcNAc...) asparagine). A disulfide bond links C488 and C491. The N-linked (GlcNAc...) asparagine glycan is linked to N511.

It belongs to the phospholipase B-like family. As to quaternary structure, interacts with IGF2R. Glycosylated; contains mannose 6-phosphate sugars.

It localises to the lysosome lumen. Its function is as follows. Putative phospholipase. In Rattus norvegicus (Rat), this protein is Putative phospholipase B-like 2 (Plbd2).